Here is a 304-residue protein sequence, read N- to C-terminus: Nod factor export ATP-binding protein I (304 aa).

An ABC transporter domain is found at I6–F236. Residue G38–T45 coordinates ATP.

It belongs to the ABC transporter superfamily. Lipooligosaccharide exporter (TC 3.A.1.102) family. The complex is composed of two ATP-binding proteins (NodI) and two transmembrane proteins (NodJ).

The protein resides in the cell inner membrane. Its function is as follows. Part of the ABC transporter complex NodIJ involved in the export of the nodulation factors (Nod factors), the bacterial signal molecules that induce symbiosis and subsequent nodulation induction. Nod factors are LCO (lipo-chitin oligosaccharide), a modified beta-1,4-linked N-acetylglucosamine oligosaccharide. This subunit is responsible for energy coupling to the transport system. The protein is Nod factor export ATP-binding protein I of Paraburkholderia xenovorans (strain LB400).